The sequence spans 296 residues: 4-diphosphocytidyl-2-C-methyl-D-erythritol kinase (296 aa).

Lysine 12 is an active-site residue. ATP is bound at residue 94–104 (PAQAGMGGGSS). The active site involves aspartate 136.

This sequence belongs to the GHMP kinase family. IspE subfamily.

The catalysed reaction is 4-CDP-2-C-methyl-D-erythritol + ATP = 4-CDP-2-C-methyl-D-erythritol 2-phosphate + ADP + H(+). The protein operates within isoprenoid biosynthesis; isopentenyl diphosphate biosynthesis via DXP pathway; isopentenyl diphosphate from 1-deoxy-D-xylulose 5-phosphate: step 3/6. Its function is as follows. Catalyzes the phosphorylation of the position 2 hydroxy group of 4-diphosphocytidyl-2C-methyl-D-erythritol. This is 4-diphosphocytidyl-2-C-methyl-D-erythritol kinase from Variovorax paradoxus (strain S110).